Reading from the N-terminus, the 85-residue chain is MLVLTRKQGEKILIGDDIEITVLDTRGDGIRIGISAPRGIRIQRDEVRKAIEAENRSAAMRNPAAEFELIASLTALQNAEDPPPR.

Belongs to the CsrA/RsmA family. As to quaternary structure, homodimer; the beta-strands of each monomer intercalate to form a hydrophobic core, while the alpha-helices form wings that extend away from the core.

Its subcellular location is the cytoplasm. In terms of biological role, a translational regulator that binds mRNA to regulate translation initiation and/or mRNA stability. Usually binds in the 5'-UTR at or near the Shine-Dalgarno sequence preventing ribosome-binding, thus repressing translation. Its main target seems to be the major flagellin gene, while its function is anatagonized by FliW. The polypeptide is Translational regulator CsrA (Leifsonia xyli subsp. xyli (strain CTCB07)).